The sequence spans 53 residues: UPF0391 membrane protein YtjA (53 aa).

A run of 2 helical transmembrane segments spans residues 4-24 (WGIIFLVIALIAAALGFGGLA) and 30-48 (AAKIVFVVGIILFLVSLFM).

Belongs to the UPF0391 family.

Its subcellular location is the cell membrane. This is UPF0391 membrane protein YtjA from Escherichia coli O6:K15:H31 (strain 536 / UPEC).